A 504-amino-acid chain; its full sequence is L-carnitine/gamma-butyrobetaine antiporter (504 aa).

12 helical membrane passes run 10 to 30 (MEPKVFFPPLIIVGILCWLTV), 51 to 71 (WGWAFEWYMVVMLFGWFWLVF), 92 to 112 (IFMMFASCTSAAVLFWGSIEI), 143 to 163 (GPLPWATYSFLSVAFAYFFFV), 195 to 215 (FYLVALIFAMGTSLGLATPLV), 231 to 251 (LDAIIITCWIILNAICVACGL), 263 to 283 (SYLSFLMLGWVFIVSGASFIM), 316 to 336 (WSVFYWAWWVIYAIQMSIFLA), 347 to 367 (LCFGMVLGLTASTWILWTVLG), 398 to 418 (WAALPLSTATMWGFFILCFIA), 446 to 466 (LLVRIGWSILVGIIGIVLLAL), and 475 to 495 (AIIAGGCPLFFVNIMVTLSFI).

The protein belongs to the BCCT transporter (TC 2.A.15) family. CaiT subfamily. In terms of assembly, homotrimer.

It is found in the cell inner membrane. The enzyme catalyses 4-(trimethylamino)butanoate(in) + (R)-carnitine(out) = 4-(trimethylamino)butanoate(out) + (R)-carnitine(in). The protein operates within amine and polyamine metabolism; carnitine metabolism. Functionally, catalyzes the exchange of L-carnitine for gamma-butyrobetaine. The protein is L-carnitine/gamma-butyrobetaine antiporter of Shigella dysenteriae serotype 1 (strain Sd197).